Reading from the N-terminus, the 277-residue chain is tRNA pseudouridine synthase A (277 aa).

Asp-57 (nucleophile) is an active-site residue. Residue Tyr-115 participates in substrate binding.

This sequence belongs to the tRNA pseudouridine synthase TruA family. As to quaternary structure, homodimer.

The enzyme catalyses uridine(38/39/40) in tRNA = pseudouridine(38/39/40) in tRNA. In terms of biological role, formation of pseudouridine at positions 38, 39 and 40 in the anticodon stem and loop of transfer RNAs. In Nitratidesulfovibrio vulgaris (strain DSM 19637 / Miyazaki F) (Desulfovibrio vulgaris), this protein is tRNA pseudouridine synthase A.